The primary structure comprises 269 residues: Tryptophan synthase alpha chain (269 aa).

Catalysis depends on proton acceptor residues Glu-49 and Asp-60.

The protein belongs to the TrpA family. As to quaternary structure, tetramer of two alpha and two beta chains.

It carries out the reaction (1S,2R)-1-C-(indol-3-yl)glycerol 3-phosphate + L-serine = D-glyceraldehyde 3-phosphate + L-tryptophan + H2O. The protein operates within amino-acid biosynthesis; L-tryptophan biosynthesis; L-tryptophan from chorismate: step 5/5. In terms of biological role, the alpha subunit is responsible for the aldol cleavage of indoleglycerol phosphate to indole and glyceraldehyde 3-phosphate. The sequence is that of Tryptophan synthase alpha chain from Histophilus somni (strain 2336) (Haemophilus somnus).